The following is a 353-amino-acid chain: C-X-C chemokine receptor type 2 (353 aa).

Over 1 to 45 (FNMESDSFEDFWKGEDLSNYSYSSALPPFLLDASPCEPESLEINK) the chain is Extracellular. The N-linked (GlcNAc...) asparagine glycan is linked to N19. The helical transmembrane segment at 46–72 (YFVVIIYALVFLLSLLGNSLVILVILY) threads the bilayer. Residues 73 to 81 (SRVGRSVTD) are Cytoplasmic-facing. The chain crosses the membrane as a helical span at residues 82–102 (VYLLNLALADLLFALTLPIWA). The Extracellular portion of the chain corresponds to 103–117 (ASKVNGWIFGTFLCK). Cysteines 116 and 193 form a disulfide. A helical transmembrane segment spans residues 118-139 (VVSLLKEVNFYSGILLLACISV). Residues 140–160 (DRYLAIVHATRTLTQKRYLVK) are Cytoplasmic-facing. Residues 161 to 180 (FICLSIWGLSLLLALPVLLF) form a helical membrane-spanning segment. Topologically, residues 181–205 (RRTIYPSNVSPVCYEDMGNNTANWR) are extracellular. Residues 206 to 228 (MLLRILPQSFGFIVPLLIMLFCY) form a helical membrane-spanning segment. Over 229–248 (GFTLRTLFKAHMGQKHRAMR) the chain is Cytoplasmic. A helical transmembrane segment spans residues 249-270 (VIFAVVLIFLLCWLPYNLVLLA). Residues 271–291 (DTLMRTQVIQETCERRNHINQ) lie on the Extracellular side of the membrane. Residues 292–312 (ALDATEILGILHSCLNPLIYA) form a helical membrane-spanning segment. Residues 313–353 (FIGQKFCHGLLKILAIHGLISKDSLPKDSRPSFVGSSSGHT) are Cytoplasmic-facing.

This sequence belongs to the G-protein coupled receptor 1 family. Interacts with IL8. Interacts with GNAI2. Post-translationally, phosphorylated upon ligand binding; which is required for desensitization.

The protein localises to the cell membrane. Its function is as follows. Receptor for interleukin-8 which is a powerful neutrophil chemotactic factor. Binding of IL-8 to the receptor causes activation of neutrophils. This response is mediated via a G-protein that activates a phosphatidylinositol-calcium second messenger system. Binds to IL-8 with high affinity. Also binds with high affinity to CXCL3, GRO/MGSA and NAP-2. The polypeptide is C-X-C chemokine receptor type 2 (CXCR2) (Gorilla gorilla gorilla (Western lowland gorilla)).